Reading from the N-terminus, the 243-residue chain is DNA repair protein RecO (243 aa).

Belongs to the RecO family.

Functionally, involved in DNA repair and RecF pathway recombination. The protein is DNA repair protein RecO of Hyphomonas neptunium (strain ATCC 15444).